The sequence spans 181 residues: Adenine phosphoribosyltransferase (181 aa).

It belongs to the purine/pyrimidine phosphoribosyltransferase family. In terms of assembly, homodimer.

It is found in the cytoplasm. It carries out the reaction AMP + diphosphate = 5-phospho-alpha-D-ribose 1-diphosphate + adenine. It functions in the pathway purine metabolism; AMP biosynthesis via salvage pathway; AMP from adenine: step 1/1. Functionally, catalyzes a salvage reaction resulting in the formation of AMP, that is energically less costly than de novo synthesis. This chain is Adenine phosphoribosyltransferase, found in Rhodopseudomonas palustris (strain HaA2).